Here is a 225-residue protein sequence, read N- to C-terminus: Transcriptional regulatory protein CssR (225 aa).

A Response regulatory domain is found at 4–117; it reads TIYLVEDEDN…ELIIRVQKLL (114 aa). A 4-aspartylphosphate modification is found at Asp52. Residues 129–224 constitute a DNA-binding region (ompR/PhoB-type); that stretch reads KNEIAVSSYR…IYGFGYRMMS (96 aa).

Phosphorylated by CssS.

It localises to the cytoplasm. In terms of biological role, member of the two-component regulatory system CssS/CssR required to control the cellular response to secretion stress. The protein is Transcriptional regulatory protein CssR (cssR) of Bacillus subtilis (strain 168).